Consider the following 68-residue polypeptide: DNA-directed RNA polymerase subunit omega (68 aa).

This sequence belongs to the RNA polymerase subunit omega family. As to quaternary structure, the RNAP catalytic core consists of 2 alpha, 1 beta, 1 beta' and 1 omega subunit. When a sigma factor is associated with the core the holoenzyme is formed, which can initiate transcription.

The enzyme catalyses RNA(n) + a ribonucleoside 5'-triphosphate = RNA(n+1) + diphosphate. Promotes RNA polymerase assembly. Latches the N- and C-terminal regions of the beta' subunit thereby facilitating its interaction with the beta and alpha subunits. The sequence is that of DNA-directed RNA polymerase subunit omega from Neisseria gonorrhoeae (strain NCCP11945).